The primary structure comprises 311 residues: Very-long-chain 3-oxoacyl-CoA reductase-B (311 aa).

The helical transmembrane segment at 8–28 threads the bilayer; that stretch reads LFWVGAVTVLWLSVSSLWSLI. An NADP(+)-binding site is contributed by 48–77; it reads GKWAVVTGATDGIGKAYAEELARRGFAIVL. A helical membrane pass occupies residues 125–145; it reads IGVLVNNVGVSYSYPEFFLNI. S187 contributes to the substrate binding site. The active-site Proton acceptor is the Y200. A helical transmembrane segment spans residues 269–289; that stretch reads GYLPHAIMGWVTASLLPAKLL.

The protein belongs to the short-chain dehydrogenases/reductases (SDR) family. 17-beta-HSD 3 subfamily.

It is found in the endoplasmic reticulum membrane. The catalysed reaction is a very-long-chain (3R)-3-hydroxyacyl-CoA + NADP(+) = a very-long-chain 3-oxoacyl-CoA + NADPH + H(+). It catalyses the reaction 17beta-estradiol + NAD(+) = estrone + NADH + H(+). The enzyme catalyses 17beta-estradiol + NADP(+) = estrone + NADPH + H(+). The protein operates within lipid metabolism; fatty acid biosynthesis. It functions in the pathway steroid biosynthesis; estrogen biosynthesis. In terms of biological role, catalyzes the second of the four reactions of the long-chain fatty acids elongation cycle. This endoplasmic reticulum-bound enzymatic process, allows the addition of two carbons to the chain of long- and very long-chain fatty acids/VLCFAs per cycle. This enzyme has a 3-ketoacyl-CoA reductase activity, reducing 3-ketoacyl-CoA to 3-hydroxyacyl-CoA, within each cycle of fatty acid elongation. Thereby, it may participate in the production of VLCFAs of different chain lengths that are involved in multiple biological processes as precursors of membrane lipids and lipid mediators. May also catalyze the transformation of estrone (E1) into estradiol (E2) and play a role in estrogen formation. This Danio rerio (Zebrafish) protein is Very-long-chain 3-oxoacyl-CoA reductase-B (hsd17b12b).